A 44-amino-acid chain; its full sequence is Conotoxin S5.1 (44 aa).

In terms of processing, contains 3 disulfide bonds. Expressed by the venom duct.

It localises to the secreted. This Conus striatus (Striated cone) protein is Conotoxin S5.1.